Consider the following 1075-residue polypeptide: Putative type I restriction enzyme MjaVIIP endonuclease subunit (1075 aa).

This sequence belongs to the HsdR family. The type I restriction/modification system is composed of three polypeptides R, M and S.

It catalyses the reaction Endonucleolytic cleavage of DNA to give random double-stranded fragments with terminal 5'-phosphates, ATP is simultaneously hydrolyzed.. Its function is as follows. The restriction (R) subunit of a type I restriction enzyme that recognizes 5'-CAAN(7)TGG-3' and cleaves a random distance away. The R subunit is required for both endonuclease and ATPase activities but not for modification. After locating a non-methylated recognition site, the enzyme complex serves as a molecular motor that translocates DNA in an ATP-dependent manner until a collision occurs that triggers cleavage. This Methanocaldococcus jannaschii (strain ATCC 43067 / DSM 2661 / JAL-1 / JCM 10045 / NBRC 100440) (Methanococcus jannaschii) protein is Putative type I restriction enzyme MjaVIIP endonuclease subunit.